The chain runs to 210 residues: 3-hexulose-6-phosphate synthase (210 aa).

It belongs to the HPS/KGPDC family. HPS subfamily.

It carries out the reaction D-ribulose 5-phosphate + formaldehyde = D-arabino-hex-3-ulose 6-phosphate. Its pathway is one-carbon metabolism; formaldehyde assimilation via RuMP pathway; D-fructose 6-phosphate from D-ribulose 5-phosphate and formaldehyde: step 1/2. Functionally, catalyzes the condensation of ribulose 5-phosphate with formaldehyde to form 3-hexulose 6-phosphate. The polypeptide is 3-hexulose-6-phosphate synthase (Staphylococcus aureus (strain bovine RF122 / ET3-1)).